The following is a 529-amino-acid chain: GTPase Obg (529 aa).

The Obg domain occupies 2–159; the sequence is ASFVDRVVLH…SDIVLELKSI (158 aa). The OBG-type G domain occupies 160–343; that stretch reads ADIALVGFPS…LGFAMAEIVK (184 aa). GTP-binding positions include 166–173, 191–195, 212–215, 295–298, and 324–326; these read GFPSAGKS, FTTLI, DVPG, NKVD, and SAT. Residues S173 and T193 each contribute to the Mg(2+) site. Residues 363–447 form the OCT domain; the sequence is PRAVNEAGFK…DDGVVFDWEP (85 aa). A compositionally biased stretch (basic and acidic residues) spans 466-502; that stretch reads FADIGDRPTRGQKRDEQQERRDAKAAARAELEAERKA. The disordered stretch occupies residues 466–529; sequence FADIGDRPTR…ESGLTTENEE (64 aa).

This sequence belongs to the TRAFAC class OBG-HflX-like GTPase superfamily. OBG GTPase family. As to quaternary structure, monomer. It depends on Mg(2+) as a cofactor.

It is found in the cytoplasm. In terms of biological role, an essential GTPase which binds GTP, GDP and possibly (p)ppGpp with moderate affinity, with high nucleotide exchange rates and a fairly low GTP hydrolysis rate. Plays a role in control of the cell cycle, stress response, ribosome biogenesis and in those bacteria that undergo differentiation, in morphogenesis control. The protein is GTPase Obg of Arthrobacter sp. (strain FB24).